Reading from the N-terminus, the 480-residue chain is Uridine 5'-monophosphate synthase (480 aa).

Ala-2 carries the post-translational modification N-acetylalanine. An OPRTase region spans residues 2-214 (AVARAALGPL…VFVAANHNGS (213 aa)). Tyr-37 is subject to Phosphotyrosine. Residue Ser-214 is modified to Phosphoserine. The segment at 215-220 (PLSIKE) is domain linker. Residues 221-480 (APKELSFGAR…WEAYLSRLGV (260 aa)) form an OMPdecase region. Ser-257 provides a ligand contact to orotidine 5'-phosphate. UMP is bound by residues Ser-257, Asp-259, and 281–283 (KTH). Residue Lys-281 participates in orotidine 5'-phosphate binding. Residues Asp-312, Lys-314, and Asp-317 each act as for OMPdecase activity in the active site. Orotidine 5'-phosphate-binding positions include Lys-314, Asp-317, Thr-321, Ser-372, 430 to 432 (QQY), and 450 to 451 (GR). UMP is bound by residues Asp-317, Thr-321, Ser-372, 430–432 (QQY), and 450–451 (GR).

In the N-terminal section; belongs to the purine/pyrimidine phosphoribosyltransferase family. The protein in the C-terminal section; belongs to the OMP decarboxylase family. As to quaternary structure, homodimer; dimerization is required for enzymatic activity.

It catalyses the reaction orotidine 5'-phosphate + diphosphate = orotate + 5-phospho-alpha-D-ribose 1-diphosphate. The enzyme catalyses orotidine 5'-phosphate + H(+) = UMP + CO2. The protein operates within pyrimidine metabolism; UMP biosynthesis via de novo pathway; UMP from orotate: step 1/2. Its pathway is pyrimidine metabolism; UMP biosynthesis via de novo pathway; UMP from orotate: step 2/2. Its function is as follows. Bifunctional enzyme catalyzing the last two steps of de novo pyrimidine biosynthesis, orotate phosphoribosyltransferase (OPRT), which converts orotate to orotidine-5'-monophosphate (OMP), and orotidine-5'-monophosphate decarboxylase (ODC), the terminal enzymatic reaction that decarboxylates OMP to uridine monophosphate (UMP). The polypeptide is Uridine 5'-monophosphate synthase (Homo sapiens (Human)).